Here is a 565-residue protein sequence, read N- to C-terminus: Sulfite reductase [NADPH] hemoprotein beta-component (565 aa).

Residues cysteine 429, cysteine 435, cysteine 474, and cysteine 478 each coordinate [4Fe-4S] cluster. Cysteine 478 contributes to the siroheme binding site.

The protein belongs to the nitrite and sulfite reductase 4Fe-4S domain family. As to quaternary structure, alpha(8)-beta(8). The alpha component is a flavoprotein, the beta component is a hemoprotein. Siroheme serves as cofactor. The cofactor is [4Fe-4S] cluster.

It catalyses the reaction hydrogen sulfide + 3 NADP(+) + 3 H2O = sulfite + 3 NADPH + 4 H(+). It participates in sulfur metabolism; hydrogen sulfide biosynthesis; hydrogen sulfide from sulfite (NADPH route): step 1/1. In terms of biological role, component of the sulfite reductase complex that catalyzes the 6-electron reduction of sulfite to sulfide. This is one of several activities required for the biosynthesis of L-cysteine from sulfate. The protein is Sulfite reductase [NADPH] hemoprotein beta-component of Shewanella sp. (strain W3-18-1).